A 372-amino-acid chain; its full sequence is Dual-specificity RNA methyltransferase RlmN (372 aa).

The active-site Proton acceptor is the Glu-93. The Radical SAM core domain occupies 99–338; the sequence is EKDRATLCIS…VTVRKTRGDD (240 aa). Cys-106 and Cys-343 are oxidised to a cystine. Residues Cys-113, Cys-117, and Cys-120 each coordinate [4Fe-4S] cluster. Residues 167 to 168, Ser-199, 221 to 223, and Asn-300 contribute to the S-adenosyl-L-methionine site; these read GE and SLH. The active-site S-methylcysteine intermediate is the Cys-343.

The protein belongs to the radical SAM superfamily. RlmN family. [4Fe-4S] cluster is required as a cofactor.

It localises to the cytoplasm. The catalysed reaction is adenosine(2503) in 23S rRNA + 2 reduced [2Fe-2S]-[ferredoxin] + 2 S-adenosyl-L-methionine = 2-methyladenosine(2503) in 23S rRNA + 5'-deoxyadenosine + L-methionine + 2 oxidized [2Fe-2S]-[ferredoxin] + S-adenosyl-L-homocysteine. It catalyses the reaction adenosine(37) in tRNA + 2 reduced [2Fe-2S]-[ferredoxin] + 2 S-adenosyl-L-methionine = 2-methyladenosine(37) in tRNA + 5'-deoxyadenosine + L-methionine + 2 oxidized [2Fe-2S]-[ferredoxin] + S-adenosyl-L-homocysteine. Its function is as follows. Specifically methylates position 2 of adenine 2503 in 23S rRNA and position 2 of adenine 37 in tRNAs. m2A2503 modification seems to play a crucial role in the proofreading step occurring at the peptidyl transferase center and thus would serve to optimize ribosomal fidelity. This chain is Dual-specificity RNA methyltransferase RlmN, found in Psychromonas ingrahamii (strain DSM 17664 / CCUG 51855 / 37).